The following is a 26-amino-acid chain: Oxyopinin-3a (26 aa).

Expressed by the venom gland.

It localises to the secreted. May have cytolytic and antimicrobial activity. The polypeptide is Oxyopinin-3a (Oxyopes takobius (Lynx spider)).